The primary structure comprises 325 residues: MKKISEQKRKHLENLVDDQGIIGALAIDQRGALKRMMGKYKEVTAQEISDFKVLVSRCLTPETSAILLDPEYGLAAAENRAQTSGLLLAYEKTGYDASTPGRLPDSLDVWSVKRLKEAGADACKFLLYYDVDESEAINERKKAYIERIGSECLAEEIPFFLEIVSYDANNSDSASKEYAKVKPHKVIEAMKEFSKDRYNVDVLKVEVPVNMNFVEGFGTESLYSQDEAQAFFNMQSEATQLPFIFLSAGVSATMFQETLKFAKKAGSSFNGVLCGRATWADGVLPFVQQGAEAAVAWLETTGKTNVEELNQVLRESAVSVFEKIQ.

This sequence belongs to the aldolase LacD family.

It catalyses the reaction D-tagatofuranose 1,6-bisphosphate = D-glyceraldehyde 3-phosphate + dihydroxyacetone phosphate. It functions in the pathway carbohydrate metabolism; D-tagatose 6-phosphate degradation; D-glyceraldehyde 3-phosphate and glycerone phosphate from D-tagatose 6-phosphate: step 2/2. The protein is Tagatose 1,6-diphosphate aldolase 1 (lacD1) of Enterococcus faecalis (strain ATCC 700802 / V583).